Reading from the N-terminus, the 139-residue chain is Putative pre-16S rRNA nuclease (139 aa).

The protein belongs to the YqgF nuclease family.

Its subcellular location is the cytoplasm. Its function is as follows. Could be a nuclease involved in processing of the 5'-end of pre-16S rRNA. The sequence is that of Putative pre-16S rRNA nuclease from Bacillus licheniformis (strain ATCC 14580 / DSM 13 / JCM 2505 / CCUG 7422 / NBRC 12200 / NCIMB 9375 / NCTC 10341 / NRRL NRS-1264 / Gibson 46).